The following is a 279-amino-acid chain: RxLR effector protein Avh331 (279 aa).

An N-terminal signal peptide occupies residues methionine 1–alanine 20. A RxLR-dEER motif is present at residues arginine 86 to arginine 106. Asparagine 100 carries an N-linked (GlcNAc...) asparagine glycan. The W1 motif stretch occupies residues alanine 129 to leucine 147. The tract at residues glycine 153–aspartate 174 is Y1 motif. The tract at residues serine 178–alanine 208 is l motif. Residues glutamine 222–valine 240 are W2 motif. The tract at residues proline 250–lysine 271 is Y2 motif.

The protein belongs to the RxLR effector family.

It is found in the secreted. The protein resides in the host cell. Functionally, effector that suppresses the host mitogen-activated protein kinase (MAPK)-based plant defense activated by the Phytophthora elicitor to promote colonization of the Phytophthora pathogen. Neither directly inhibits MAPK kinase activity nor interacts with MAPK proteins but acts downstream by suppressing transcriptional activation of resistance marker genes such as FRK1, WRKY22 and WRKY29. Confers avirulence in the presence of resistance protein Rps1k in host. The polypeptide is RxLR effector protein Avh331 (Phytophthora sojae (strain P6497) (Soybean stem and root rot agent)).